A 366-amino-acid polypeptide reads, in one-letter code: Chorismate synthase (366 aa).

An NADP(+)-binding site is contributed by Arg-48. FMN contacts are provided by residues 125-127 (RSS), 238-239 (NA), Gly-278, 293-297 (KPTSS), and Arg-319.

The protein belongs to the chorismate synthase family. As to quaternary structure, homotetramer. FMNH2 is required as a cofactor.

The enzyme catalyses 5-O-(1-carboxyvinyl)-3-phosphoshikimate = chorismate + phosphate. Its pathway is metabolic intermediate biosynthesis; chorismate biosynthesis; chorismate from D-erythrose 4-phosphate and phosphoenolpyruvate: step 7/7. Its function is as follows. Catalyzes the anti-1,4-elimination of the C-3 phosphate and the C-6 proR hydrogen from 5-enolpyruvylshikimate-3-phosphate (EPSP) to yield chorismate, which is the branch point compound that serves as the starting substrate for the three terminal pathways of aromatic amino acid biosynthesis. This reaction introduces a second double bond into the aromatic ring system. This is Chorismate synthase from Alkalilimnicola ehrlichii (strain ATCC BAA-1101 / DSM 17681 / MLHE-1).